Consider the following 423-residue polypeptide: G protein-activated inward rectifier potassium channel 2 (423 aa).

The Cytoplasmic segment spans residues 1–89 (MAKLTESMTN…IFTTLVDLKW (89 aa)). Phosphoserine is present on residues S16 and S23. The helical transmembrane segment at 90–114 (RFNLLIFVMVYTVTWLFFGMIWWLI) threads the bilayer. Residues 115-138 (AYIRGDMDHIEDPSWTPCVTNLNG) are Extracellular-facing. Positions 139–150 (FVSAFLFSIETE) form an intramembrane region, helical; Pore-forming. The pore-forming intramembrane region spans 151–157 (TTIGYGY). Positions 152–157 (TIGYGY) match the Selectivity filter motif. Over 158–166 (RVITDKCPE) the chain is Extracellular. A helical transmembrane segment spans residues 167-188 (GIILLLIQSVLGSIVNAFMVGC). Over 189–423 (MFVKISQPKK…VANLENESKV (235 aa)) the chain is Cytoplasmic. Positions 390-423 (NQHAELETEEEEKNLEEQTERNGDVANLENESKV) are disordered. Positions 420-423 (ESKV) match the PDZ-binding motif.

It belongs to the inward rectifier-type potassium channel (TC 1.A.2.1) family. KCNJ6 subfamily. As to quaternary structure, associates with KCNJ3/GIRK1 or KCNJ5/GRIK4 to form a G-protein-activated heteromultimer pore-forming unit. The resulting inward current is much larger. Interacts (via PDZ-binding motif) with SNX27 (via PDZ domain); the interaction is required when endocytosed to prevent degradation in lysosomes and promote recycling to the plasma membrane.

The protein resides in the membrane. It catalyses the reaction K(+)(in) = K(+)(out). Its activity is regulated as follows. Activated by phosphatidylinositol 4,5 biphosphate (PtdIns(4,5)P2). In terms of biological role, inward rectifier potassium channels are characterized by a greater tendency to allow potassium to flow into the cell rather than out of it. Their voltage dependence is regulated by the concentration of extracellular potassium; as external potassium is raised, the voltage range of the channel opening shifts to more positive voltages. The inward rectification is mainly due to the blockage of outward current by internal magnesium. This potassium channel may be involved in the regulation of insulin secretion by glucose and/or neurotransmitters acting through G-protein-coupled receptors. The sequence is that of G protein-activated inward rectifier potassium channel 2 (KCNJ6) from Pongo abelii (Sumatran orangutan).